Consider the following 384-residue polypeptide: S-adenosylmethionine synthase (384 aa).

His15 contributes to the ATP binding site. A Mg(2+)-binding site is contributed by Asp17. Glu43 contacts K(+). Glu56 and Gln99 together coordinate L-methionine. The tract at residues 99 to 109 (QSPDINQGVDR) is flexible loop. ATP is bound by residues 164 to 166 (DAK), 230 to 231 (RF), Asp239, 245 to 246 (RK), Ala262, and Lys266. Asp239 contacts L-methionine. L-methionine is bound at residue Lys270.

Belongs to the AdoMet synthase family. In terms of assembly, homotetramer; dimer of dimers. Mg(2+) serves as cofactor. The cofactor is K(+).

It localises to the cytoplasm. The catalysed reaction is L-methionine + ATP + H2O = S-adenosyl-L-methionine + phosphate + diphosphate. It participates in amino-acid biosynthesis; S-adenosyl-L-methionine biosynthesis; S-adenosyl-L-methionine from L-methionine: step 1/1. Its function is as follows. Catalyzes the formation of S-adenosylmethionine (AdoMet) from methionine and ATP. The overall synthetic reaction is composed of two sequential steps, AdoMet formation and the subsequent tripolyphosphate hydrolysis which occurs prior to release of AdoMet from the enzyme. This Photobacterium profundum (strain SS9) protein is S-adenosylmethionine synthase.